The primary structure comprises 312 residues: Methionyl-tRNA formyltransferase (312 aa).

Residue 113 to 116 (SILP) coordinates (6S)-5,6,7,8-tetrahydrofolate.

It belongs to the Fmt family.

It catalyses the reaction L-methionyl-tRNA(fMet) + (6R)-10-formyltetrahydrofolate = N-formyl-L-methionyl-tRNA(fMet) + (6S)-5,6,7,8-tetrahydrofolate + H(+). Attaches a formyl group to the free amino group of methionyl-tRNA(fMet). The formyl group appears to play a dual role in the initiator identity of N-formylmethionyl-tRNA by promoting its recognition by IF2 and preventing the misappropriation of this tRNA by the elongation apparatus. This chain is Methionyl-tRNA formyltransferase, found in Hydrogenovibrio crunogenus (strain DSM 25203 / XCL-2) (Thiomicrospira crunogena).